The following is a 523-amino-acid chain: Cilia- and flagella-associated protein 157 (523 aa).

The segment at 1–31 is disordered; sequence MAPKKKPNKGGKEMQGKKIGGKKDASGTKTP. A compositionally biased stretch (basic and acidic residues) spans 10–26; it reads GGKEMQGKKIGGKKDAS. At Thr30 the chain carries Phosphothreonine. 3 coiled-coil regions span residues 32-191, 248-274, and 302-371; these read ELAM…LEKK, VQLL…LENT, and GTEE…VLIQ. The segment at 419–440 is disordered; sequence QPDMGSHQDKQPQGLSKESQRI. Residues 429-440 are compositionally biased toward polar residues; it reads QPQGLSKESQRI.

This sequence belongs to the CFAP157 family. As to quaternary structure, interacts with TUBB and TUBA4A. Interacts with CEP350. Specifically expressed in tissues containing motile cilia.

Its subcellular location is the cytoplasm. It localises to the cytoskeleton. The protein localises to the cilium basal body. Specifically required during spermatogenesis for flagellum morphogenesis and sperm motility. May be required to suppress the formation of supernumerary axonemes and ensure a correct ultrastructure. The polypeptide is Cilia- and flagella-associated protein 157 (Mus musculus (Mouse)).